The chain runs to 396 residues: Probable sugar efflux transporter (396 aa).

Helical transmembrane passes span 15 to 35 (VVTL…PVGL), 50 to 70 (VGIM…PFML), 81 to 101 (LICL…SWSF), 103 to 123 (VLVI…SITA), 136 to 156 (AQAL…GLPL), 170 to 190 (FFAI…LLPL), 209 to 229 (PALM…YTAY), 246 to 266 (FATA…VIFG), 275 to 295 (ALVS…LPAA), 299 to 319 (IHLG…GLGM), 333 to 353 (VAMA…ALVG), and 364 to 384 (MIGY…IIIF).

Belongs to the major facilitator superfamily. SotB (TC 2.A.1.2) family.

The protein localises to the cell inner membrane. Functionally, involved in the efflux of sugars. The physiological role may be the reduction of the intracellular concentration of toxic sugars or sugar metabolites. This Escherichia coli O17:K52:H18 (strain UMN026 / ExPEC) protein is Probable sugar efflux transporter.